The chain runs to 381 residues: ELMO domain-containing protein 3 (381 aa).

A disordered region spans residues 1–31 (MNEKSCSFHSKEELRDGQGERLSAGYSPSYD). Residues 9-19 (HSKEELRDGQG) show a composition bias toward basic and acidic residues. The 155-residue stretch at 170–324 (VHGRVLQTIY…ELEVLAKKSP (155 aa)) folds into the ELMO domain.

As to expression, both isoform 1 and isoform 6 are widely expressed.

It is found in the cell projection. Its subcellular location is the stereocilium. The protein localises to the kinocilium. It localises to the cytoplasm. The protein resides in the cytoskeleton. Acts as a GTPase-activating protein (GAP) for ARL2 with low specific activity. The protein is ELMO domain-containing protein 3 (ELMOD3) of Homo sapiens (Human).